The following is a 125-amino-acid chain: Protein MGF 110-4L (125 aa).

The first 29 residues, 1–29 (MLVVFFLGILGLLANQILGLPTQAGGHLR), serve as a signal peptide directing secretion. N-linked (GlcNAc...) asparagine; by host glycosylation is present at Asn-65. The Prevents secretion from ER motif lies at 122–125 (KEDL).

Belongs to the asfivirus MGF 110 family.

Its subcellular location is the virion. It localises to the host endoplasmic reticulum-Golgi intermediate compartment. Functionally, causes the redistribution of lumenal ER protein to an enlarged ERGIC compartment. The protein is Protein MGF 110-4L of Ornithodoros (relapsing fever ticks).